The following is a 697-amino-acid chain: DNA ligase (697 aa).

NAD(+) contacts are provided by residues 41-45 (DPVYD), 90-91 (SL), and Glu129. Catalysis depends on Lys131, which acts as the N6-AMP-lysine intermediate. Residues Arg152, Glu189, Lys308, and Lys332 each coordinate NAD(+). Zn(2+) is bound by residues Cys426, Cys429, Cys444, and Cys449. One can recognise a BRCT domain in the interval 617 to 697 (AANHHLTGST…ALQNMLRGST (81 aa)).

This sequence belongs to the NAD-dependent DNA ligase family. LigA subfamily. Mg(2+) serves as cofactor. Mn(2+) is required as a cofactor.

It catalyses the reaction NAD(+) + (deoxyribonucleotide)n-3'-hydroxyl + 5'-phospho-(deoxyribonucleotide)m = (deoxyribonucleotide)n+m + AMP + beta-nicotinamide D-nucleotide.. DNA ligase that catalyzes the formation of phosphodiester linkages between 5'-phosphoryl and 3'-hydroxyl groups in double-stranded DNA using NAD as a coenzyme and as the energy source for the reaction. It is essential for DNA replication and repair of damaged DNA. In Synechococcus sp. (strain CC9311), this protein is DNA ligase.